We begin with the raw amino-acid sequence, 220 residues long: Large ribosomal subunit protein uL3 (220 aa).

A disordered region spans residues 130–156 (AIKRHGQSRGPMSHGSHFHRAPGSVGM).

This sequence belongs to the universal ribosomal protein uL3 family. Part of the 50S ribosomal subunit. Forms a cluster with proteins L14 and L19.

One of the primary rRNA binding proteins, it binds directly near the 3'-end of the 23S rRNA, where it nucleates assembly of the 50S subunit. The protein is Large ribosomal subunit protein uL3 of Staphylococcus aureus (strain Mu3 / ATCC 700698).